Consider the following 869-residue polypeptide: Alanine--tRNA ligase (869 aa).

Positions 559, 563, 660, and 664 each coordinate Zn(2+).

Belongs to the class-II aminoacyl-tRNA synthetase family. Zn(2+) serves as cofactor.

It is found in the cytoplasm. The catalysed reaction is tRNA(Ala) + L-alanine + ATP = L-alanyl-tRNA(Ala) + AMP + diphosphate. Catalyzes the attachment of alanine to tRNA(Ala) in a two-step reaction: alanine is first activated by ATP to form Ala-AMP and then transferred to the acceptor end of tRNA(Ala). Also edits incorrectly charged Ser-tRNA(Ala) and Gly-tRNA(Ala) via its editing domain. The polypeptide is Alanine--tRNA ligase (Janthinobacterium sp. (strain Marseille) (Minibacterium massiliensis)).